The primary structure comprises 448 residues: N-succinylarginine dihydrolase (448 aa).

Substrate contacts are provided by residues 19 to 28, Asn110, and 137 to 138; these read AGLSSGNIAS and HR. Glu174 is a catalytic residue. Arg216 is a substrate binding site. His252 is an active-site residue. Substrate is bound by residues Asp254 and Asn366. The active-site Nucleophile is Cys372.

The protein belongs to the succinylarginine dihydrolase family. Homodimer.

The catalysed reaction is N(2)-succinyl-L-arginine + 2 H2O + 2 H(+) = N(2)-succinyl-L-ornithine + 2 NH4(+) + CO2. Its pathway is amino-acid degradation; L-arginine degradation via AST pathway; L-glutamate and succinate from L-arginine: step 2/5. In terms of biological role, catalyzes the hydrolysis of N(2)-succinylarginine into N(2)-succinylornithine, ammonia and CO(2). In Legionella pneumophila (strain Paris), this protein is N-succinylarginine dihydrolase.